We begin with the raw amino-acid sequence, 445 residues long: Argininosuccinate synthase (445 aa).

ATP is bound by residues 17 to 25 (AFSGGLDTS) and alanine 43. Tyrosine 99 lines the L-citrulline pocket. Residues glycine 129 and threonine 131 each contribute to the ATP site. L-aspartate-binding residues include threonine 131, asparagine 135, and aspartate 136. Residue asparagine 135 coordinates L-citrulline. Aspartate 136 is a binding site for ATP. L-citrulline-binding residues include arginine 139 and serine 192. ATP is bound at residue aspartate 194. Positions 201, 203, and 280 each coordinate L-citrulline.

It belongs to the argininosuccinate synthase family. Type 2 subfamily. Homotetramer.

It is found in the cytoplasm. It carries out the reaction L-citrulline + L-aspartate + ATP = 2-(N(omega)-L-arginino)succinate + AMP + diphosphate + H(+). Its pathway is amino-acid biosynthesis; L-arginine biosynthesis; L-arginine from L-ornithine and carbamoyl phosphate: step 2/3. This is Argininosuccinate synthase from Gemmatimonas aurantiaca (strain DSM 14586 / JCM 11422 / NBRC 100505 / T-27).